Consider the following 262-residue polypeptide: Probable lipoprotein EnvF (262 aa).

Residues 1-25 form the signal peptide; that stretch reads MNKIHVTYKNLLLPITFIAATLISA. C26 carries the N-palmitoyl cysteine lipid modification. The S-diacylglycerol cysteine moiety is linked to residue C26. The interval 227 to 262 is disordered; that stretch reads EAEKAQQLVEQSRKDIESQRKKAAGKMNEIQQTFKK. Over residues 237–246 the composition is skewed to basic and acidic residues; the sequence is QSRKDIESQR.

It is found in the cell membrane. The sequence is that of Probable lipoprotein EnvF (envF) from Salmonella typhimurium (strain LT2 / SGSC1412 / ATCC 700720).